The following is a 70-amino-acid chain: uncharacterized protein (70 aa).

The chain crosses the membrane as a helical span at residues 15 to 37 (LLVSSISESAVALIIITIRILFS).

It is found in the membrane. This is an uncharacterized protein from Saccharomyces cerevisiae (strain ATCC 204508 / S288c) (Baker's yeast).